The following is a 72-amino-acid chain: MLKPKGKNTKKAAAADEDDGAVAVVGKFVKEWGTWTAKKAKVITHYGFIPLVIIIGMNSEPKPSLSQLLSPV.

Residues 2–41 (LKPKGKNTKKAAAADEDDGAVAVVGKFVKEWGTWTAKKAK) lie on the Cytoplasmic side of the membrane. Residues 42–59 (VITHYGFIPLVIIIGMNS) form a helical membrane-spanning segment. The Mitochondrial intermembrane segment spans residues 60 to 72 (EPKPSLSQLLSPV).

The protein belongs to the Tom7 family. Forms part of the preprotein translocase complex of the outer mitochondrial membrane (TOM complex).

It is found in the mitochondrion outer membrane. Functionally, seems to act as a modulator of the dynamics of the mitochondrial protein transport machinery. Seems to promote the dissociation of subunits of the outer membrane translocase. The sequence is that of Mitochondrial import receptor subunit TOM7-1 (TOM7-1) from Solanum tuberosum (Potato).